A 3564-amino-acid polypeptide reads, in one-letter code: CUB and sushi domain-containing protein 1 (3564 aa).

A signal peptide spans 1–29 (MTAWRKFKSLLLPLVLAVLCAGLLTAAKG). Residues 30 to 3487 (QNCGGLVQGP…NHYQGTSSGS (3458 aa)) lie on the Extracellular side of the membrane. 10 disulfides stabilise this stretch: cysteine 32-cysteine 58, cysteine 145-cysteine 185, cysteine 171-cysteine 202, cysteine 208-cysteine 234, cysteine 349-cysteine 389, cysteine 375-cysteine 406, cysteine 411-cysteine 437, cysteine 527-cysteine 567, cysteine 553-cysteine 580, and cysteine 584-cysteine 610. A CUB 1 domain is found at 32 to 140 (CGGLVQGPNG…QGFKAMYEVL (109 aa)). Residues asparagine 40 and asparagine 57 are each glycosylated (N-linked (GlcNAc...) asparagine). Positions 143–204 (HTCGNPGEIL…WDFPAPFCRA (62 aa)) constitute a Sushi 1 domain. In terms of domain architecture, CUB 2 spans 208–312 (CGGTLRGTSG…KGFNAQFQVK (105 aa)). Residues 347 to 408 (DMCPDPGIPD…WNDHRPICRA (62 aa)) form the Sushi 2 domain. The CUB 3 domain occupies 411–522 (CGSNLRGPSG…PGFKAVYQEI (112 aa)). The region spanning 525 to 582 (GGCGDPGIPAYGKRTGSSFLHGDTLTFECQAAFELVGERVITCQKNNQWSGNKPSCVF) is the Sushi 3 domain. The CUB 4 domain maps to 584–692 (CFFNFTAPSG…RGFNITYTTF (109 aa)). N-linked (GlcNAc...) asparagine glycans are attached at residues asparagine 587 and asparagine 686. Positions 695–756 (NECHDPGIPV…WSSTVPRCEA (62 aa)) constitute a Sushi 4 domain. 6 disulfide bridges follow: cysteine 697/cysteine 738, cysteine 723/cysteine 754, cysteine 758/cysteine 784, cysteine 873/cysteine 913, cysteine 899/cysteine 926, and cysteine 930/cysteine 956. Positions 758 to 866 (CGGHLTASSG…VGFLIHYESV (109 aa)) constitute a CUB 5 domain. Positions 871 to 928 (DSCLDPGIPVNGQRHGSNFGIRSTVTFSCDPGYTLSDDEPLVCEKNHQWNHALPSCDA) constitute a Sushi 5 domain. A CUB 6 domain is found at 930–1040 (CGGYIHGKSG…EGFNITFAEY (111 aa)). N-linked (GlcNAc...) asparagine glycans are attached at residues asparagine 955, asparagine 1015, and asparagine 1034. In terms of domain architecture, Sushi 6 spans 1043–1102 (EPCDDPGVPAFSRRIGFQFGVGDTLAFTCFQGYRLEGATKLTCLGGGRRVWSAPLPRCVA). 3 disulfide bridges follow: cysteine 1045/cysteine 1085, cysteine 1071/cysteine 1100, and cysteine 1104/cysteine 1130. Positions 1104 to 1212 (CGASVKGNEG…QGFQLTYTSF (109 aa)) constitute a CUB 7 domain. N-linked (GlcNAc...) asparagine glycosylation is found at asparagine 1184 and asparagine 1197. The region spanning 1215 to 1275 (VKCEDPGIPN…WDKPMPSCVA (61 aa)) is the Sushi 7 domain. 12 disulfide bridges follow: cysteine 1217–cysteine 1258, cysteine 1244–cysteine 1273, cysteine 1277–cysteine 1304, cysteine 1391–cysteine 1431, cysteine 1417–cysteine 1447, cysteine 1451–cysteine 1477, cysteine 1564–cysteine 1604, cysteine 1590–cysteine 1621, cysteine 1625–cysteine 1651, cysteine 1741–cysteine 1781, cysteine 1767–cysteine 1798, and cysteine 1802–cysteine 1828. The CUB 8 domain maps to 1277–1386 (CGGLVHAATS…SGFSIQFSTS (110 aa)). Residues 1389–1449 (STCNDPGMPQ…WQPDPPSCIA (61 aa)) enclose the Sushi 8 domain. Asparagine 1399 carries N-linked (GlcNAc...) asparagine glycosylation. A CUB 9 domain is found at 1451–1559 (CGGNLTGPAG…SGFAIEFKEK (109 aa)). N-linked (GlcNAc...) asparagine glycans are attached at residues asparagine 1454 and asparagine 1572. Positions 1562–1623 (EACFDPGNIM…WDRALPACQA (62 aa)) constitute a Sushi 9 domain. The 109-residue stretch at 1625-1733 (CGGQYTGSEG…RGFHFVYQAV (109 aa)) folds into the CUB 10 domain. Asparagine 1644 carries an N-linked (GlcNAc...) asparagine glycan. One can recognise a Sushi 10 domain in the interval 1739–1800 (TQCSSVPEPR…WNDTIPSCVV (62 aa)). 3 N-linked (GlcNAc...) asparagine glycosylation sites follow: asparagine 1792, asparagine 1805, and asparagine 1882. A CUB 11 domain is found at 1802–1910 (CSGNFTQRRG…AGFHLEYKTV (109 aa)). The Sushi 11 domain occupies 1913-1972 (AACQEPALPSNGIKIGDRYMVNDVLSFQCEPGYTLQGRSHISCMPGTVRRWNYPSPLCIA). 3 disulfide bridges follow: cysteine 1915–cysteine 1955, cysteine 1941–cysteine 1970, and cysteine 1974–cysteine 2000. The CUB 12 domain maps to 1974–2082 (CGGTLTSMSG…QGFKLSYQAY (109 aa)). A glycan (N-linked (GlcNAc...) asparagine) is linked at asparagine 2018. In terms of domain architecture, Sushi 12 spans 2085 to 2144 (QNCPDPPAFQNGFMINSDYSVGQSISFECYPGYILLGHPVLTCQHGTDRNWNYPFPRCDA). 3 disulfides stabilise this stretch: cysteine 2087–cysteine 2127, cysteine 2113–cysteine 2142, and cysteine 2146–cysteine 2172. A CUB 13 domain is found at 2146–2257 (CGYNVTSQNG…LNFHAFQLKR (112 aa)). N-linked (GlcNAc...) asparagine glycans are attached at residues asparagine 2149, asparagine 2154, and asparagine 2187. One can recognise a Sushi 13 domain in the interval 2256–2317 (KRCPPPPAVP…FQGSPPTCEA (62 aa)). 3 cysteine pairs are disulfide-bonded: cysteine 2258–cysteine 2300, cysteine 2286–cysteine 2315, and cysteine 2319–cysteine 2347. Positions 2319–2430 (CPANEVRTES…KGFKIRYAAP (112 aa)) constitute a CUB 14 domain. N-linked (GlcNAc...) asparagine glycosylation is found at asparagine 2358, asparagine 2394, asparagine 2400, asparagine 2445, asparagine 2470, and asparagine 2503. Sushi domains are found at residues 2430 to 2492 (PYCS…LCQA), 2493 to 2554 (VSCG…TCKP), 2555 to 2619 (VPCP…RCKV), 2620 to 2677 (ISCG…RCLA), 2678 to 2735 (GHCG…VCVP), 2736 to 2793 (ITCG…ICRV), 2794 to 2856 (VNCS…KCLA), 2857 to 2914 (ISCG…HCSG), 2918 to 2975 (GFCG…VCEA), 2976 to 3034 (VSCG…DCTI), 3035 to 3094 (ISCG…LCKA), 3095 to 3152 (VLCN…QCLP), 3153 to 3210 (VFCG…TCID), 3214 to 3272 (TACP…ECIP), and 3273 to 3332 (HACR…VCKS). Disulfide bonds link cysteine 2432–cysteine 2473, cysteine 2459–cysteine 2490, cysteine 2495–cysteine 2537, cysteine 2521–cysteine 2552, cysteine 2557–cysteine 2602, cysteine 2588–cysteine 2617, cysteine 2622–cysteine 2662, cysteine 2648–cysteine 2675, cysteine 2680–cysteine 2720, cysteine 2706–cysteine 2733, cysteine 2738–cysteine 2778, and cysteine 2764–cysteine 2791. N-linked (GlcNAc...) asparagine glycosylation is present at asparagine 2605. N-linked (GlcNAc...) asparagine glycans are attached at residues asparagine 2750 and asparagine 2761. N-linked (GlcNAc...) asparagine glycosylation is present at asparagine 2795. 18 disulfide bridges follow: cysteine 2796–cysteine 2841, cysteine 2827–cysteine 2854, cysteine 2859–cysteine 2899, cysteine 2885–cysteine 2912, cysteine 2920–cysteine 2960, cysteine 2946–cysteine 2973, cysteine 2978–cysteine 3019, cysteine 3005–cysteine 3032, cysteine 3037–cysteine 3079, cysteine 3063–cysteine 3092, cysteine 3097–cysteine 3137, cysteine 3123–cysteine 3150, cysteine 3155–cysteine 3195, cysteine 3181–cysteine 3208, cysteine 3216–cysteine 3257, cysteine 3243–cysteine 3270, cysteine 3275–cysteine 3317, and cysteine 3302–cysteine 3330. The N-linked (GlcNAc...) asparagine glycan is linked to asparagine 2894. Asparagine 2963 carries an N-linked (GlcNAc...) asparagine glycan. Residues asparagine 3022, asparagine 3056, and asparagine 3086 are each glycosylated (N-linked (GlcNAc...) asparagine). N-linked (GlcNAc...) asparagine glycosylation is found at asparagine 3228 and asparagine 3260. Residues asparagine 3339, asparagine 3379, and asparagine 3386 are each glycosylated (N-linked (GlcNAc...) asparagine). The helical transmembrane segment at 3488–3508 (VAAAILVPFFALILSGFAFYL) threads the bilayer. The Cytoplasmic portion of the chain corresponds to 3509–3564 (YKHRTRPKVQYNGYAGHENSNGQASFENPMYDTNLKPTEAKAVRFDTTLNTVCTVV).

This sequence belongs to the CSMD family.

It localises to the membrane. The sequence is that of CUB and sushi domain-containing protein 1 (Csmd1) from Mus musculus (Mouse).